The primary structure comprises 121 residues: Large ribosomal subunit protein bL19 (121 aa).

This sequence belongs to the bacterial ribosomal protein bL19 family.

Functionally, this protein is located at the 30S-50S ribosomal subunit interface and may play a role in the structure and function of the aminoacyl-tRNA binding site. This is Large ribosomal subunit protein bL19 (rplS) from Chlamydia pneumoniae (Chlamydophila pneumoniae).